Consider the following 162-residue polypeptide: NADH-quinone oxidoreductase subunit I 1 (162 aa).

2 consecutive 4Fe-4S ferredoxin-type domains span residues 52–82 (LRRY…IEAG) and 93–122 (VRYD…EGPN). [4Fe-4S] cluster contacts are provided by Cys62, Cys65, Cys68, Cys72, Cys102, Cys105, Cys108, and Cys112.

The protein belongs to the complex I 23 kDa subunit family. In terms of assembly, NDH-1 is composed of 14 different subunits. Subunits NuoA, H, J, K, L, M, N constitute the membrane sector of the complex. It depends on [4Fe-4S] cluster as a cofactor.

Its subcellular location is the cell inner membrane. It catalyses the reaction a quinone + NADH + 5 H(+)(in) = a quinol + NAD(+) + 4 H(+)(out). Functionally, NDH-1 shuttles electrons from NADH, via FMN and iron-sulfur (Fe-S) centers, to quinones in the respiratory chain. The immediate electron acceptor for the enzyme in this species is believed to be ubiquinone. Couples the redox reaction to proton translocation (for every two electrons transferred, four hydrogen ions are translocated across the cytoplasmic membrane), and thus conserves the redox energy in a proton gradient. The polypeptide is NADH-quinone oxidoreductase subunit I 1 (Rhodopseudomonas palustris (strain ATCC BAA-98 / CGA009)).